Reading from the N-terminus, the 157-residue chain is 2-C-methyl-D-erythritol 2,4-cyclodiphosphate synthase (157 aa).

A divalent metal cation contacts are provided by Asp-9 and His-11. Residues 9-11 (DVH) and 35-36 (HS) each bind 4-CDP-2-C-methyl-D-erythritol 2-phosphate. His-43 provides a ligand contact to a divalent metal cation. Residues 57-59 (DIG), 62-66 (FPDTD), 101-107 (AEKPKMA), 133-136 (TTTE), Phe-140, and Arg-143 each bind 4-CDP-2-C-methyl-D-erythritol 2-phosphate.

It belongs to the IspF family. Homotrimer. The cofactor is a divalent metal cation.

It carries out the reaction 4-CDP-2-C-methyl-D-erythritol 2-phosphate = 2-C-methyl-D-erythritol 2,4-cyclic diphosphate + CMP. It functions in the pathway isoprenoid biosynthesis; isopentenyl diphosphate biosynthesis via DXP pathway; isopentenyl diphosphate from 1-deoxy-D-xylulose 5-phosphate: step 4/6. Functionally, involved in the biosynthesis of isopentenyl diphosphate (IPP) and dimethylallyl diphosphate (DMAPP), two major building blocks of isoprenoid compounds. Catalyzes the conversion of 4-diphosphocytidyl-2-C-methyl-D-erythritol 2-phosphate (CDP-ME2P) to 2-C-methyl-D-erythritol 2,4-cyclodiphosphate (ME-CPP) with a corresponding release of cytidine 5-monophosphate (CMP). The polypeptide is 2-C-methyl-D-erythritol 2,4-cyclodiphosphate synthase (Listeria monocytogenes serotype 4b (strain CLIP80459)).